A 592-amino-acid polypeptide reads, in one-letter code: Aspartate--tRNA ligase (592 aa).

E173 lines the L-aspartate pocket. The aspartate stretch occupies residues 197 to 200 (QLFK). R219 serves as a coordination point for L-aspartate. ATP-binding positions include 219–221 (RDE) and Q228. L-aspartate is bound at residue H448. E482 lines the ATP pocket. Position 489 (R489) interacts with L-aspartate. Residue 534 to 537 (GLDR) coordinates ATP.

Belongs to the class-II aminoacyl-tRNA synthetase family. Type 1 subfamily. Homodimer.

The protein resides in the cytoplasm. The enzyme catalyses tRNA(Asp) + L-aspartate + ATP = L-aspartyl-tRNA(Asp) + AMP + diphosphate. Its function is as follows. Catalyzes the attachment of L-aspartate to tRNA(Asp) in a two-step reaction: L-aspartate is first activated by ATP to form Asp-AMP and then transferred to the acceptor end of tRNA(Asp). The polypeptide is Aspartate--tRNA ligase (Shewanella putrefaciens (strain CN-32 / ATCC BAA-453)).